A 476-amino-acid chain; its full sequence is S-adenosylmethionine-dependent nucleotide dehydratase (476 aa).

Residues 1-168 (MKTKITLSGF…LTANEVADLI (168 aa)) are cytidylate kinase-like domain. 9–17 (GFAGTGKST) lines the ATP pocket. Positions 176 to 400 (NAVSKIPSVN…HKDVETIVPE (225 aa)) constitute a Radical SAM core domain. The segment at 183 to 476 (SVNFHLWQPC…DLRKEEVSYE (294 aa)) is prokaryotic viperin domain. [4Fe-4S] cluster contacts are provided by Cys192, Cys196, and Cys199.

This sequence in the N-terminal section; belongs to the cytidylate kinase-like family. In the C-terminal section; belongs to the radical SAM superfamily. Viperin family. The cofactor is [4Fe-4S] cluster.

It catalyses the reaction GTP + AH2 + S-adenosyl-L-methionine = 3'-deoxy-3',4'-didehydro-GTP + 5'-deoxyadenosine + L-methionine + A + H2O + H(+). Expression of pVip60 in E.coli (strain MG1655) confers resistance to phage T7; prevents culture collapse upon infection. Catalyzes the conversion of guanosine triphosphate (GTP) to 3'-deoxy-3',4'-didehydro-GTP (ddhGTP), probably via a SAM-dependent radical mechanism. The modified nucleotide represses transcription from T7 RNA polymerase-directed genes (possibly by acting as chain terminators), strongly suggesting these nucleotides block viral polymerase transcription. In terms of biological role, the N-terminus of the protein may generate NTP for use by the viperin domain. This Lacinutrix mariniflava (strain JCM 13824 / KCCM 42306 / AKS432) protein is S-adenosylmethionine-dependent nucleotide dehydratase.